The primary structure comprises 227 residues: Ribosome-recycling factor, chloroplastic (227 aa).

The transit peptide at 1–34 (WTAAANYVKIKVGTGKFARKTVVLSQKRTGTLKC) directs the protein to the chloroplast. The stretch at 167–212 (KVALRNIRRDAIKSYDKLEKEKKLSEDNVKDLSSDLQKVIDEYIKK) forms a coiled coil.

Belongs to the RRF family.

The protein localises to the plastid. It is found in the chloroplast. Responsible for the release of ribosomes from messenger RNA at the termination of chloroplastic protein biosynthesis. The polypeptide is Ribosome-recycling factor, chloroplastic (RRF) (Daucus carota (Wild carrot)).